A 90-amino-acid polypeptide reads, in one-letter code: Small ribosomal subunit protein bS18 (90 aa).

It belongs to the bacterial ribosomal protein bS18 family. As to quaternary structure, part of the 30S ribosomal subunit. Forms a tight heterodimer with protein bS6.

In terms of biological role, binds as a heterodimer with protein bS6 to the central domain of the 16S rRNA, where it helps stabilize the platform of the 30S subunit. In Bordetella bronchiseptica (strain ATCC BAA-588 / NCTC 13252 / RB50) (Alcaligenes bronchisepticus), this protein is Small ribosomal subunit protein bS18.